The primary structure comprises 884 residues: Protein P (884 aa).

Residues methionine 1–glutamine 184 form a terminal protein domain (TP) region. Positions leucine 185 to leucine 387 are spacer. Positions arginine 299–serine 345 are disordered. The interval aspartate 388–glutamine 729 is polymerase/reverse transcriptase domain (RT). The Reverse transcriptase domain maps to aspartate 398–isoleucine 639. Residues aspartate 470, aspartate 590, and aspartate 591 each contribute to the Mg(2+) site.

Belongs to the hepadnaviridae P protein family.

The catalysed reaction is DNA(n) + a 2'-deoxyribonucleoside 5'-triphosphate = DNA(n+1) + diphosphate. It carries out the reaction Endonucleolytic cleavage to 5'-phosphomonoester.. Its activity is regulated as follows. Activated by host HSP70 and HSP40 in vitro to be able to bind the epsilon loop of the pgRNA. Because deletion of the RNase H region renders the protein partly chaperone-independent, the chaperones may be needed indirectly to relieve occlusion of the RNA-binding site by this domain. Inhibited by several reverse-transcriptase inhibitors: Lamivudine, Adefovir and Entecavir. Functionally, multifunctional enzyme that converts the viral RNA genome into dsDNA in viral cytoplasmic capsids. This enzyme displays a DNA polymerase activity that can copy either DNA or RNA templates, and a ribonuclease H (RNase H) activity that cleaves the RNA strand of RNA-DNA heteroduplexes in a partially processive 3'- to 5'-endonucleasic mode. Neo-synthesized pregenomic RNA (pgRNA) are encapsidated together with the P protein, and reverse-transcribed inside the nucleocapsid. Initiation of reverse-transcription occurs first by binding the epsilon loop on the pgRNA genome, and is initiated by protein priming, thereby the 5'-end of (-)DNA is covalently linked to P protein. Partial (+)DNA is synthesized from the (-)DNA template and generates the relaxed circular DNA (RC-DNA) genome. After budding and infection, the RC-DNA migrates in the nucleus, and is converted into a plasmid-like covalently closed circular DNA (cccDNA). The activity of P protein does not seem to be necessary for cccDNA generation, and is presumably released from (+)DNA by host nuclear DNA repair machinery. The sequence is that of Protein P from Woodchuck hepatitis B virus (isolate 7) (WHV).